The following is a 619-amino-acid chain: DNA mismatch repair protein MutL (619 aa).

The tract at residues 339 to 400 is disordered; that stretch reads AEKDDPPAPR…GGASWPHAQP (62 aa).

It belongs to the DNA mismatch repair MutL/HexB family.

In terms of biological role, this protein is involved in the repair of mismatches in DNA. It is required for dam-dependent methyl-directed DNA mismatch repair. May act as a 'molecular matchmaker', a protein that promotes the formation of a stable complex between two or more DNA-binding proteins in an ATP-dependent manner without itself being part of a final effector complex. The polypeptide is DNA mismatch repair protein MutL (Klebsiella pneumoniae subsp. pneumoniae (strain ATCC 700721 / MGH 78578)).